The chain runs to 415 residues: Gamma-glutamyl phosphate reductase (415 aa).

This sequence belongs to the gamma-glutamyl phosphate reductase family.

It is found in the cytoplasm. It carries out the reaction L-glutamate 5-semialdehyde + phosphate + NADP(+) = L-glutamyl 5-phosphate + NADPH + H(+). It functions in the pathway amino-acid biosynthesis; L-proline biosynthesis; L-glutamate 5-semialdehyde from L-glutamate: step 2/2. Its function is as follows. Catalyzes the NADPH-dependent reduction of L-glutamate 5-phosphate into L-glutamate 5-semialdehyde and phosphate. The product spontaneously undergoes cyclization to form 1-pyrroline-5-carboxylate. The protein is Gamma-glutamyl phosphate reductase of Bacillus subtilis (strain 168).